We begin with the raw amino-acid sequence, 120 residues long: NAD(P)H-quinone oxidoreductase subunit 3, chloroplastic (120 aa).

The next 3 helical transmembrane spans lie at 7–27 (YDSF…AFSI), 63–83 (YMFA…YPWA), and 89–109 (LGLF…VGLV).

The protein belongs to the complex I subunit 3 family. In terms of assembly, NDH is composed of at least 16 different subunits, 5 of which are encoded in the nucleus.

It is found in the plastid. It localises to the chloroplast thylakoid membrane. The catalysed reaction is a plastoquinone + NADH + (n+1) H(+)(in) = a plastoquinol + NAD(+) + n H(+)(out). The enzyme catalyses a plastoquinone + NADPH + (n+1) H(+)(in) = a plastoquinol + NADP(+) + n H(+)(out). Functionally, NDH shuttles electrons from NAD(P)H:plastoquinone, via FMN and iron-sulfur (Fe-S) centers, to quinones in the photosynthetic chain and possibly in a chloroplast respiratory chain. The immediate electron acceptor for the enzyme in this species is believed to be plastoquinone. Couples the redox reaction to proton translocation, and thus conserves the redox energy in a proton gradient. The protein is NAD(P)H-quinone oxidoreductase subunit 3, chloroplastic of Adiantum capillus-veneris (Maidenhair fern).